The primary structure comprises 503 residues: Probable cytosol aminopeptidase (503 aa).

Lys272 and Asp277 together coordinate Mn(2+). Residue Lys284 is part of the active site. Residues Asp295, Asp354, and Glu356 each coordinate Mn(2+). The active site involves Arg358.

Belongs to the peptidase M17 family. Mn(2+) serves as cofactor.

Its subcellular location is the cytoplasm. It catalyses the reaction Release of an N-terminal amino acid, Xaa-|-Yaa-, in which Xaa is preferably Leu, but may be other amino acids including Pro although not Arg or Lys, and Yaa may be Pro. Amino acid amides and methyl esters are also readily hydrolyzed, but rates on arylamides are exceedingly low.. The catalysed reaction is Release of an N-terminal amino acid, preferentially leucine, but not glutamic or aspartic acids.. Functionally, presumably involved in the processing and regular turnover of intracellular proteins. Catalyzes the removal of unsubstituted N-terminal amino acids from various peptides. The polypeptide is Probable cytosol aminopeptidase (Chlorobium limicola (strain DSM 245 / NBRC 103803 / 6330)).